The sequence spans 283 residues: Formamidopyrimidine-DNA glycosylase (283 aa).

Catalysis depends on P2, which acts as the Schiff-base intermediate with DNA. Residue E3 is the Proton donor of the active site. K58 functions as the Proton donor; for beta-elimination activity in the catalytic mechanism. Residues H100, R119, and R162 each contribute to the DNA site. The segment at 247–283 (DVYGREGEPCRRAGCDGTVQRITQSGRSSFYCAQCQR) adopts an FPG-type zinc-finger fold. R273 functions as the Proton donor; for delta-elimination activity in the catalytic mechanism.

It belongs to the FPG family. Monomer. Requires Zn(2+) as cofactor.

The enzyme catalyses Hydrolysis of DNA containing ring-opened 7-methylguanine residues, releasing 2,6-diamino-4-hydroxy-5-(N-methyl)formamidopyrimidine.. The catalysed reaction is 2'-deoxyribonucleotide-(2'-deoxyribose 5'-phosphate)-2'-deoxyribonucleotide-DNA = a 3'-end 2'-deoxyribonucleotide-(2,3-dehydro-2,3-deoxyribose 5'-phosphate)-DNA + a 5'-end 5'-phospho-2'-deoxyribonucleoside-DNA + H(+). In terms of biological role, involved in base excision repair of DNA damaged by oxidation or by mutagenic agents. Acts as a DNA glycosylase that recognizes and removes damaged bases. Has a preference for oxidized purines, such as 7,8-dihydro-8-oxoguanine (8-oxoG). Has AP (apurinic/apyrimidinic) lyase activity and introduces nicks in the DNA strand. Cleaves the DNA backbone by beta-delta elimination to generate a single-strand break at the site of the removed base with both 3'- and 5'-phosphates. The chain is Formamidopyrimidine-DNA glycosylase from Ruegeria pomeroyi (strain ATCC 700808 / DSM 15171 / DSS-3) (Silicibacter pomeroyi).